We begin with the raw amino-acid sequence, 688 residues long: Glycine--tRNA ligase beta subunit (688 aa).

It belongs to the class-II aminoacyl-tRNA synthetase family. As to quaternary structure, tetramer of two alpha and two beta subunits.

It is found in the cytoplasm. The enzyme catalyses tRNA(Gly) + glycine + ATP = glycyl-tRNA(Gly) + AMP + diphosphate. This Haemophilus influenzae (strain ATCC 51907 / DSM 11121 / KW20 / Rd) protein is Glycine--tRNA ligase beta subunit (glyS).